Reading from the N-terminus, the 437-residue chain is MGAVLKAEANIFRSHPFRPMNQATPKKLRSAPCIGVALLLMATGSIQAAEAPPYSVLLQQSLAMAPTMMVQAANVRAAGADAAQARAWLNPRFDTLAENLGAPSSGGQSQRQNTYSITQPFEIGGKRGARIEVGERNYEAAQARERQLRVNYAAELAVAYATAEAAFGRQALAEENLALANEELTVARALVETGKEATLRTAQAQASVSAAQAIEAAASSDVTSTLARLSALSGATEAYTGISSSLLSAQPAMTPGGTTTDDSPAVRTAEAERNAFDAQVNVERKRWIPEVGITAGVRRYGWSNESGYIVGLTASIPLFDRNRNGIDAAVQRVAAAQARLDTVRLEANAARRSAVSQVAATDKQLAAASQGEQAASEAYRVGRLGYEAGKTPLVELLAVRRALVDARQLTIDARLARVRALAALAQADGRLAFEESR.

The signal sequence occupies residues 1 to 48 (MGAVLKAEANIFRSHPFRPMNQATPKKLRSAPCIGVALLLMATGSIQA).

This sequence belongs to the outer membrane factor (OMF) (TC 1.B.17) family.

Functionally, component of the NCC cation-efflux system that confers resistance to nickel, cobalt and cadmium. This is Nickel-cobalt-cadmium resistance protein NccC (nccC) from Alcaligenes xylosoxydans xylosoxydans (Achromobacter xylosoxidans).